The primary structure comprises 594 residues: UvrABC system protein C (594 aa).

In terms of domain architecture, GIY-YIG spans 17-94; sequence LEPGCYLMKD…IKQYQPRYNI (78 aa). Positions 199-234 constitute a UVR domain; it reads KTILHHLEDRMNKASEQLDFEQAKEYRDMIQHIHNL.

The protein belongs to the UvrC family. Interacts with UvrB in an incision complex.

The protein resides in the cytoplasm. The UvrABC repair system catalyzes the recognition and processing of DNA lesions. UvrC both incises the 5' and 3' sides of the lesion. The N-terminal half is responsible for the 3' incision and the C-terminal half is responsible for the 5' incision. The chain is UvrABC system protein C from Staphylococcus epidermidis (strain ATCC 12228 / FDA PCI 1200).